The primary structure comprises 152 residues: MLVINSCRAASRLALRSLNLRSPIATRTFSTGLALKTKDVVNITFVRANGDKIKTSGKVGDSLLDVVVNNNVDLDGFGACEGTLTCSTCHLIFKTSDFEKLPDKPGDEELDMLDLAYELTDTSRLGCQITLSKDMEGLEVHVPSTINDARAA.

A mitochondrion-targeting transit peptide spans 1 to 29 (MLVINSCRAASRLALRSLNLRSPIATRTF). Residues 41-146 (VNITFVRANG…GLEVHVPSTI (106 aa)) enclose the 2Fe-2S ferredoxin-type domain. The [2Fe-2S] cluster site is built by C80, C86, C89, and C127.

It belongs to the adrenodoxin/putidaredoxin family. [2Fe-2S] cluster serves as cofactor.

The protein resides in the mitochondrion. Required for ecdysteroidogenesis in the prothoracic gland which is necessary for larval to pupal transition. This is Adrenodoxin-like protein 2, mitochondrial from Drosophila melanogaster (Fruit fly).